The chain runs to 128 residues: Large ribosomal subunit protein eL22 (128 aa).

Belongs to the eukaryotic ribosomal protein eL22 family. Component of the large ribosomal subunit.

The protein resides in the cytoplasm. Its function is as follows. Component of the large ribosomal subunit. The ribosome is a large ribonucleoprotein complex responsible for the synthesis of proteins in the cell. The chain is Large ribosomal subunit protein eL22 (rpl22) from Ictalurus punctatus (Channel catfish).